The chain runs to 393 residues: 26S proteasome regulatory subunit RPN9 (393 aa).

In terms of domain architecture, PCI spans 187 to 355; sequence SFYYTSLLYL…ELVTISWVQP (169 aa).

The protein belongs to the proteasome subunit S11 family.

In terms of biological role, acts as a regulatory subunit of the 26S proteasome which is involved in the ATP-dependent degradation of ubiquitinated proteins. This is 26S proteasome regulatory subunit RPN9 (RPN9) from Saccharomyces cerevisiae (strain ATCC 204508 / S288c) (Baker's yeast).